Reading from the N-terminus, the 1022-residue chain is Collagen alpha-1(I) chain (1022 aa).

The tract at residues 1–1022 (SAGGISVPGP…PGPPGPPGPP (1022 aa)) is disordered. Pro20, Pro23, Pro26, Pro35, Pro38, Pro41, Pro56, Pro71, Pro77, Pro86, and Pro92 each carry 4-hydroxyproline. The segment covering 28 to 47 (PQGFQGPPGEPGEPGASGPM) has biased composition (low complexity). Residues 59–73 (NGDDGEAGKPGRPGE) are compositionally biased toward basic and acidic residues. The residue at position 95 (Lys95) is a 5-hydroxylysine; alternate. Lys95 carries O-linked (Gal...) hydroxylysine; alternate glycosylation. Position 101 is a phosphoserine (Ser101). Residues 109-125 (DAGPAGPKGEPGSPGEN) show a composition bias toward low complexity. Pro119, Pro122, Pro128, Pro137, Pro143, Pro164, Pro173, Pro176, Pro203, Pro206, Pro218, Pro224, Pro233, Pro239, Pro242, and Pro257 each carry 4-hydroxyproline. The span at 143–161 (PGASGPAGARGNDGAAGAA) shows a compositional bias: low complexity. Residues 163-175 (PPGPTGPAGPPGF) are compositionally biased toward pro residues. The span at 209 to 259 (AGAAGPAGNPGADGQPGAKGANGAPGIAGAPGFPGARGPSGPQGPSGAPGP) shows a compositional bias: low complexity. Lys260 is subject to 5-hydroxylysine. Residues Pro266, Pro269, Pro281, Pro290, Pro305, Pro311, Pro320, and Pro326 each carry the 4-hydroxyproline modification. The span at 315-324 (GERGGPGSRG) shows a compositional bias: gly residues. Lys335 carries the 5-hydroxylysine modification. A 4-hydroxyproline mark is found at Pro344, Pro353, Pro359, Pro365, Pro374, Pro377, Pro386, Pro395, Pro401, Pro413, Pro422, Pro431, Pro434, Pro452, Pro470, Pro476, Pro482, Pro488, Pro494, Pro500, Pro512, Pro521, Pro533, Pro545, Pro548, Pro554, Pro560, and Pro569. The span at 368–394 (KGLTGSPGSPGPDGKTGPPGPAGQDGR) shows a compositional bias: low complexity. Residues 403 to 422 (ARGQAGVMGFPGPKGAAGEP) are compositionally biased toward low complexity. The span at 464–491 (QGPAGSPGFQGLPGPAGPPGEAGKPGEQ) shows a compositional bias: low complexity. The segment covering 530 to 557 (NGAPGNDGAKGDAGAPGAPGSQGAPGLQ) has biased composition (low complexity). At Lys581 the chain carries 5-hydroxylysine. Residues Pro587, Pro602, and Pro608 each carry the 4-hydroxyproline modification. Residues 614-628 (SGPSGPAGPTGARGA) show a composition bias toward low complexity. Ser617 is modified (phosphoserine). 4-hydroxyproline occurs at positions 629, 635, 638, 647, 653, 671, 680, and 689. A compositionally biased stretch (low complexity) spans 641-668 (AGFAGPPGADGQPGAKGEPGDAGAKGDA). A compositionally biased stretch (pro residues) spans 670-682 (PPGPAGPTGPPGP). Position 692 is a 5-hydroxylysine (Lys692). Residues 697–713 (SAGPPGATGFPGAAGRV) are compositionally biased toward low complexity. Residues Pro701 and Pro707 each carry the 4-hydroxyproline modification. Pro715 carries the 3-hydroxyproline modification. 16 positions are modified to 4-hydroxyproline: Pro716, Pro725, Pro728, Pro749, Pro758, Pro767, Pro776, Pro794, Pro803, Pro806, Pro812, Pro827, Pro833, Pro839, Pro848, and Pro854. Positions 742–751 (ETGPAGRPGE) are enriched in low complexity. Positions 761–776 (TGEKGSPGADGPAGAP) are enriched in low complexity. Residues 826–836 (PPGPVGPPGLA) show a composition bias toward pro residues. Over residues 838–853 (PPGESGREGSPGAEGS) the composition is skewed to low complexity. 5-hydroxylysine is present on Lys863. The segment covering 872 to 887 (AGPPGAPGAPGAPGPV) has biased composition (pro residues). A 4-hydroxyproline mark is found at Pro875, Pro878, and Pro881. Residues 908–922 (AGPAGARGPAGPQGP) show a composition bias toward low complexity. Positions 923–937 (RGDKGETGEQGDRGI) are enriched in basic and acidic residues. Residue Lys926 is modified to 5-hydroxylysine. 5-hydroxylysine; alternate is present on Lys938. Lys938 carries an O-linked (Gal...) hydroxylysine; alternate glycan. 4 positions are modified to 4-hydroxyproline: Pro953, Pro956, Pro974, and Pro989. Low complexity predominate over residues 956–989 (PGEQGPSGASGPAGPRGPPGSAGSPGKDGLNGLP). Position 994 is a 3-hydroxyproline (Pro994). Pro995 carries the post-translational modification 4-hydroxyproline. The segment covering 1007-1022 (VGPPGPPGPPGPPGPP) has biased composition (pro residues). Residue Pro1009 is modified to 3-hydroxyproline. Pro1010 is subject to 4-hydroxyproline. 3-hydroxyproline is present on Pro1012. Residue Pro1013 is modified to 4-hydroxyproline. The residue at position 1015 (Pro1015) is a 3-hydroxyproline. Residues Pro1016, Pro1019, and Pro1022 each carry the 4-hydroxyproline modification.

The protein belongs to the fibrillar collagen family. Trimers of one alpha 2(I) and two alpha 1(I) chains. In terms of processing, prolines at the third position of the tripeptide repeating unit (G-X-Y) are hydroxylated in some or all of the chains. In terms of tissue distribution, expressed in bone.

Its subcellular location is the secreted. The protein resides in the extracellular space. It localises to the extracellular matrix. In terms of biological role, type I collagen is a member of group I collagen (fibrillar forming collagen). The polypeptide is Collagen alpha-1(I) chain (Mylodon darwinii (Giant ground sloth)).